Consider the following 565-residue polypeptide: Dihydroxy-acid dehydratase (565 aa).

D80 lines the Mg(2+) pocket. C121 contributes to the [2Fe-2S] cluster binding site. The Mg(2+) site is built by D122 and K123. K123 carries the post-translational modification N6-carboxylysine. Residue C194 participates in [2Fe-2S] cluster binding. E447 serves as a coordination point for Mg(2+). S473 (proton acceptor) is an active-site residue.

It belongs to the IlvD/Edd family. Homodimer. [2Fe-2S] cluster is required as a cofactor. Requires Mg(2+) as cofactor.

The catalysed reaction is (2R)-2,3-dihydroxy-3-methylbutanoate = 3-methyl-2-oxobutanoate + H2O. It carries out the reaction (2R,3R)-2,3-dihydroxy-3-methylpentanoate = (S)-3-methyl-2-oxopentanoate + H2O. It functions in the pathway amino-acid biosynthesis; L-isoleucine biosynthesis; L-isoleucine from 2-oxobutanoate: step 3/4. It participates in amino-acid biosynthesis; L-valine biosynthesis; L-valine from pyruvate: step 3/4. In terms of biological role, functions in the biosynthesis of branched-chain amino acids. Catalyzes the dehydration of (2R,3R)-2,3-dihydroxy-3-methylpentanoate (2,3-dihydroxy-3-methylvalerate) into 2-oxo-3-methylpentanoate (2-oxo-3-methylvalerate) and of (2R)-2,3-dihydroxy-3-methylbutanoate (2,3-dihydroxyisovalerate) into 2-oxo-3-methylbutanoate (2-oxoisovalerate), the penultimate precursor to L-isoleucine and L-valine, respectively. In Chlorobium luteolum (strain DSM 273 / BCRC 81028 / 2530) (Pelodictyon luteolum), this protein is Dihydroxy-acid dehydratase.